We begin with the raw amino-acid sequence, 556 residues long: WD repeat-containing protein srw1 (556 aa).

Residues Met1–Arg80 are disordered. A compositionally biased stretch (low complexity) spans Ser12–Ser37. Positions Ser43–Phe55 are enriched in basic and acidic residues. Ser62 carries the post-translational modification Phosphoserine. Residues Arg69–Pro78 show a composition bias toward basic and acidic residues. Thr98 carries the post-translational modification Phosphothreonine. A compositionally biased stretch (polar residues) spans Thr126–Thr146. Residues Thr126–Asn173 are disordered. Positions Thr159–Ser169 are enriched in low complexity. Thr177 is subject to Phosphothreonine. A phosphoserine mark is found at Ser187 and Ser214. WD repeat units lie at residues Gly246 to Met285, Tyr289 to Thr328, Gly331 to Arg368, Ala372 to Ser411, Asn414 to Asn456, Asp458 to Thr499, and Gly502 to Ser541.

It belongs to the WD repeat CDC20/Fizzy family. Post-translationally, phosphorylated by cdc2-cdc13-CDK complex. This targets srw1 for proteolysis which in turn promotes cdc13 turnover. Dephosphorylated during G1 arrest.

It is found in the nucleus. In terms of biological role, has a role in cell differentiation and cell cycling by negatively regulating cig2 and cdc12-associated cdc2. Down-regulates the level of cdc13, particularly in a nitrogen deprived environment. Regulator of cell cycle G1 phase progression. Prevents onset of mitosis during the pre-Start G1 period. Required for degradation of cdc13 mitotic cyclin B during G1 arrest but not during mitotic exit. This chain is WD repeat-containing protein srw1 (srw1), found in Schizosaccharomyces pombe (strain 972 / ATCC 24843) (Fission yeast).